A 396-amino-acid polypeptide reads, in one-letter code: Elongation factor Tu (396 aa).

A tr-type G domain is found at 10–206; sequence KPHCNIGTIG…AVDAYIPQPE (197 aa). The tract at residues 19-26 is G1; that stretch reads GHVDHGKT. 19–26 contributes to the GTP binding site; it reads GHVDHGKT. T26 provides a ligand contact to Mg(2+). The segment at 60 to 64 is G2; that stretch reads GITIS. Residues 81 to 84 are G3; sequence DCPG. GTP contacts are provided by residues 81–85 and 136–139; these read DCPGH and NKCD. The segment at 136 to 139 is G4; the sequence is NKCD. The segment at 174–176 is G5; sequence SAL.

The protein belongs to the TRAFAC class translation factor GTPase superfamily. Classic translation factor GTPase family. EF-Tu/EF-1A subfamily. In terms of assembly, monomer.

Its subcellular location is the cytoplasm. The enzyme catalyses GTP + H2O = GDP + phosphate + H(+). In terms of biological role, GTP hydrolase that promotes the GTP-dependent binding of aminoacyl-tRNA to the A-site of ribosomes during protein biosynthesis. This is Elongation factor Tu from Nitrobacter winogradskyi (strain ATCC 25391 / DSM 10237 / CIP 104748 / NCIMB 11846 / Nb-255).